We begin with the raw amino-acid sequence, 266 residues long: Thymidylate synthase (266 aa).

Arg-24 serves as a coordination point for dUMP. His-54 is a binding site for (6R)-5,10-methylene-5,6,7,8-tetrahydrofolate. 129–130 contacts dUMP; that stretch reads RR. Cys-149 functions as the Nucleophile in the catalytic mechanism. DUMP-binding positions include 169–172, Asn-180, and 210–212; these read RSAD and HIY. A (6R)-5,10-methylene-5,6,7,8-tetrahydrofolate-binding site is contributed by Asp-172. Ala-265 serves as a coordination point for (6R)-5,10-methylene-5,6,7,8-tetrahydrofolate.

This sequence belongs to the thymidylate synthase family. Bacterial-type ThyA subfamily. Homodimer.

It is found in the cytoplasm. The catalysed reaction is dUMP + (6R)-5,10-methylene-5,6,7,8-tetrahydrofolate = 7,8-dihydrofolate + dTMP. It functions in the pathway pyrimidine metabolism; dTTP biosynthesis. Catalyzes the reductive methylation of 2'-deoxyuridine-5'-monophosphate (dUMP) to 2'-deoxythymidine-5'-monophosphate (dTMP) while utilizing 5,10-methylenetetrahydrofolate (mTHF) as the methyl donor and reductant in the reaction, yielding dihydrofolate (DHF) as a by-product. This enzymatic reaction provides an intracellular de novo source of dTMP, an essential precursor for DNA biosynthesis. The chain is Thymidylate synthase from Mycolicibacterium smegmatis (strain ATCC 700084 / mc(2)155) (Mycobacterium smegmatis).